A 66-amino-acid chain; its full sequence is Regulator of G-protein signaling 11 (66 aa).

Residues 1–66 (EACEELRFGG…DAAQLHIYML (66 aa)) form the RGS domain.

Heterodimer with Gbeta5. Interacts with RGS7BP, leading to regulate the subcellular location of the heterodimer formed with Gbeta5.

Inhibits signal transduction by increasing the GTPase activity of G protein alpha subunits thereby driving them into their inactive GDP-bound form. The chain is Regulator of G-protein signaling 11 (Rgs11) from Rattus norvegicus (Rat).